We begin with the raw amino-acid sequence, 225 residues long: UPF0758 protein BcerKBAB4_4299 (225 aa).

Residues 103–225 enclose the MPN domain; that stretch reads SIRSPEDCAS…FVSLKEKGHI (123 aa). Residues H174, H176, and D187 each contribute to the Zn(2+) site. Residues 174-187 carry the JAMM motif motif; the sequence is HNHPSGDPAPSRED.

It belongs to the UPF0758 family.

In Bacillus mycoides (strain KBAB4) (Bacillus weihenstephanensis), this protein is UPF0758 protein BcerKBAB4_4299.